Here is a 230-residue protein sequence, read N- to C-terminus: UPF0173 metal-dependent hydrolase Pden_0574 (230 aa).

It belongs to the UPF0173 family.

This chain is UPF0173 metal-dependent hydrolase Pden_0574, found in Paracoccus denitrificans (strain Pd 1222).